The primary structure comprises 3477 residues: Abnormal spindle-like microcephaly-associated protein homolog (3477 aa).

Positions 1-34 (MANRRVGRGCWEVSPTERRPPAGLRGPATEEEAS) are disordered. A phosphoserine mark is found at S283, S367, S392, and S425. Residues 417–433 (NENSQVPQSPQDWSKSE) are compositionally biased toward polar residues. Disordered stretches follow at residues 417–436 (NENSQVPQSPQDWSKSEVSP) and 563–583 (MPSSTTASVARKRKSDESMED). S605 is subject to Phosphoserine. The Calponin-homology (CH) 1 domain occupies 920 to 1056 (KASKEILLAF…LLWKIAFAFQ (137 aa)). Residues 1057–1076 (VDISLNLDQLKEEIAFLKHT) are a coiled coil. Position 1103 is a phosphoserine (S1103). A Calponin-homology (CH) 2 domain is found at 1110 to 1261 (SENIKLLMDW…YLSFLCARLL (152 aa)). 39 consecutive IQ domains span residues 1347–1378 (QNKAASLIQGYWRRYSTRKRFLKLKYYSIILQ), 1393–1422 (YLWATVTIQRHWRAYLRRKQDQQRYEMLKS), 1582–1613 (LKKTIIKFQAHIRKHQQLQKYKKMKKAAVIIQ), 1605–1634 (MKKAAVIIQTHFRAYIFARKVLASYQKTRS), 1632–1661 (TRSAVIVLQSAYRGMQARKMYIHILTSVIK), 1655–1684 (ILTSVIKIQSYYRAYVSKKEFLSLKNATIK), 1728–1757 (MRESCIKLQAFVRGYLVRKQMRLQRKAVIS), 1751–1782 (QRKAVISLQSYFRMRKARQYYLKMYKAIIVIQ), 1801–1830 (VKKAATCLQAAYRGYKIRQLIKQQSIAAVK), 1824–1853 (QSIAAVKIQSAFRGYNKRVKYQSVLQSIIK), 1874–1903 (TKAAVVSLQSAYRGWKVRKQIRREHQAALK), 1897–1928 (EHQAALKIQSAFRMAKAQKQFRLFKTAALVIQ), 1947–1978 (LRHAVLILQSMWKGKTLRRQLQRQHKCAIIIQ), 1970–2001 (QHKCAIIIQSYYRMHVQQKKWKIMKKAALLIQ), 2020–2049 (TKAAVVTLQSAYRGMKVRKRIKDCNKAAVT), 2043–2074 (CNKAAVTIQSKYRAYKTKKKYATYRASAIIIQ), 2093–2124 (LKKTAIKIQSVYRGIRVRRHIQHMHRAATYIK), 2116–2147 (MHRAATYIKAMFKMHQSRISYHTMRKAAIVIQ), 2239–2270 (LRHSVIYIQAIFRGKKARRHLKMMHVAATLIQ), 2262–2293 (MHVAATLIQRRFRTLMMRRRFLSLKKTAVWIQ), 2311–2342 (VQNAVIKIQSSYRRWMIRKKMREMHRAATFIQ), 2334–2365 (MHRAATFIQATFRMQRVHMRYQALKQASVVIQ), 2384–2415 (QRHSAVILQAAFRGMKTRRHLKSMHSSATLIQ), 2407–2438 (MHSSATLIQSRFRSLLVRRRFISLKKATIFVQ), 2457–2488 (LRKAAITVQSSYRRLMVKKKLQEMQRAAVLIQ), 2480–2511 (MQRAAVLIQATFRMHRTYVTFQTWKQASILIQ), 2530–2561 (QWHSAVVIQAAYKGMKARQHLREKHKAAIIIQ), 2624–2653 (QHQAAIIIQKHCKAFKIRKHYLHLRATVVS), 2665–2696 (RTQAVICIQSYYRGFKVRRDIQNMHRAATLIQ), 2688–2719 (MHRAATLIQSFYRMHRAKVDYQTKKTAIVVIQ), 2738–2767 (VQKSVRTIQAAFRGMKVRQKLKNISEEKMA), 2814–2845 (QSRAAVTIQKAFRRMVTRKVETQKCAALRIQF), 2859–2890 (QKRAAITLQHYFRTWQTRKQFLLYRKAAVVLQ), 2909–2938 (IRSSVIIIQARSKGFIQKRKFQEIKNSTIK), 2932–2963 (IKNSTIKIQAMWRRYRAKKYLCKVKAACKIQA), 2954–2985 (KVKAACKIQAWYRCWRAHKEYLAILKAVKIIQ), 3029–3060 (RHRAACLIQAHYRGYKERQVFLRQKSAALIIQ), 3079–3110 (FKKSTVILQALVRGWLVRKRILEQRTKIRLLH), and 3204–3235 (FTSGIIKIQALWRGYSWRKKNDCTKIKAIRLS).

Its subcellular location is the cytoplasm. The protein localises to the cytoskeleton. It is found in the spindle. The protein resides in the nucleus. Functionally, probable role in mitotic spindle regulation and coordination of mitotic processes. May have a preferential role in regulating neurogenesis. In Colobus guereza (Mantled guereza), this protein is Abnormal spindle-like microcephaly-associated protein homolog (ASPM).